A 549-amino-acid polypeptide reads, in one-letter code: Small ribosomal subunit protein bS1 (549 aa).

S1 motif domains lie at 21–87 (GSIV…LSRE), 105–171 (KATV…VSRR), 192–260 (GSEV…LGLK), 277–347 (NSKL…LGLK), 364–434 (GDKV…LGIK), and 451–512 (GAVV…LSVK).

The protein belongs to the bacterial ribosomal protein bS1 family.

Its function is as follows. Binds mRNA; thus facilitating recognition of the initiation point. It is needed to translate mRNA with a short Shine-Dalgarno (SD) purine-rich sequence. The protein is Small ribosomal subunit protein bS1 (rpsA) of Haemophilus influenzae (strain ATCC 51907 / DSM 11121 / KW20 / Rd).